Here is a 599-residue protein sequence, read N- to C-terminus: UvrABC system protein C (599 aa).

The GIY-YIG domain occupies 18–96 (QLPGVYKMLG…IKQHRPPYNI (79 aa)). Residues 207-242 (KELNQELIAKMEQAAADLEFEKAVFYRDRLSLLREV) form the UVR domain.

It belongs to the UvrC family. In terms of assembly, interacts with UvrB in an incision complex.

The protein resides in the cytoplasm. In terms of biological role, the UvrABC repair system catalyzes the recognition and processing of DNA lesions. UvrC both incises the 5' and 3' sides of the lesion. The N-terminal half is responsible for the 3' incision and the C-terminal half is responsible for the 5' incision. This is UvrABC system protein C from Acinetobacter baumannii (strain SDF).